We begin with the raw amino-acid sequence, 156 residues long: Transcription antitermination protein NusB (156 aa).

This sequence belongs to the NusB family.

Its function is as follows. Involved in transcription antitermination. Required for transcription of ribosomal RNA (rRNA) genes. Binds specifically to the boxA antiterminator sequence of the ribosomal RNA (rrn) operons. This is Transcription antitermination protein NusB from Rickettsia africae (strain ESF-5).